The following is a 140-amino-acid chain: Nucleoside diphosphate kinase (140 aa).

The ATP site is built by Lys11, Phe59, Arg87, Thr93, Arg104, and Asn114. The Pros-phosphohistidine intermediate role is filled by His117.

It belongs to the NDK family. Homotetramer. It depends on Mg(2+) as a cofactor.

It is found in the cytoplasm. The catalysed reaction is a 2'-deoxyribonucleoside 5'-diphosphate + ATP = a 2'-deoxyribonucleoside 5'-triphosphate + ADP. It catalyses the reaction a ribonucleoside 5'-diphosphate + ATP = a ribonucleoside 5'-triphosphate + ADP. Major role in the synthesis of nucleoside triphosphates other than ATP. The ATP gamma phosphate is transferred to the NDP beta phosphate via a ping-pong mechanism, using a phosphorylated active-site intermediate. The protein is Nucleoside diphosphate kinase of Cereibacter sphaeroides (strain ATCC 17025 / ATH 2.4.3) (Rhodobacter sphaeroides).